The primary structure comprises 387 residues: Probable multidrug resistance protein EmrK (387 aa).

At 1 to 16 the chain is on the cytoplasmic side; that stretch reads MEQINSNKKHSNRRKY. The helical transmembrane segment at 17-37 threads the bilayer; that stretch reads FSLLAVVLFIAFSGAYAYWSM. Over 38 to 387 the chain is Periplasmic; that stretch reads ELEDMISTDD…SNIISHNGQL (350 aa).

It belongs to the membrane fusion protein (MFP) (TC 8.A.1) family. In terms of assembly, part of the tripartite efflux system EmrYK-TolC, which is composed of an inner membrane transporter, EmrY, a membrane fusion protein, EmrK, and an outer membrane component, TolC. The complex forms a large protein conduit and can translocate molecules across both the inner and outer membranes.

It is found in the cell inner membrane. Part of the tripartite efflux system EmrYK-TolC, which confers resistance to various drugs. The chain is Probable multidrug resistance protein EmrK (emrK) from Escherichia coli (strain K12).